A 67-amino-acid polypeptide reads, in one-letter code: Cell division protein ZapB (67 aa).

The stretch at 3–59 forms a coiled coil; sequence LELLSQLETKIQTALETIELLKLELDEEKEKAANLAEQNHQLKQELSSWNDKITGLV.

This sequence belongs to the ZapB family. As to quaternary structure, homodimer. The ends of the coiled-coil dimer bind to each other, forming polymers. Interacts with FtsZ.

It is found in the cytoplasm. In terms of biological role, non-essential, abundant cell division factor that is required for proper Z-ring formation. It is recruited early to the divisome by direct interaction with FtsZ, stimulating Z-ring assembly and thereby promoting cell division earlier in the cell cycle. Its recruitment to the Z-ring requires functional FtsA or ZipA. The polypeptide is Cell division protein ZapB (Shewanella amazonensis (strain ATCC BAA-1098 / SB2B)).